A 386-amino-acid chain; its full sequence is 1-deoxy-D-xylulose 5-phosphate reductoisomerase (386 aa).

7 residues coordinate NADPH: Thr-10, Gly-11, Ser-12, Ile-13, Gly-36, Asn-38, and Asn-122. Lys-123 lines the 1-deoxy-D-xylulose 5-phosphate pocket. Glu-124 contributes to the NADPH binding site. Asp-148 serves as a coordination point for Mn(2+). 1-deoxy-D-xylulose 5-phosphate contacts are provided by Ser-149, Glu-150, Ser-174, and His-197. A Mn(2+)-binding site is contributed by Glu-150. Gly-203 contributes to the NADPH binding site. Ser-210, Asn-215, Lys-216, and Glu-219 together coordinate 1-deoxy-D-xylulose 5-phosphate. Glu-219 serves as a coordination point for Mn(2+).

It belongs to the DXR family. The cofactor is Mg(2+). Mn(2+) is required as a cofactor.

The enzyme catalyses 2-C-methyl-D-erythritol 4-phosphate + NADP(+) = 1-deoxy-D-xylulose 5-phosphate + NADPH + H(+). Its pathway is isoprenoid biosynthesis; isopentenyl diphosphate biosynthesis via DXP pathway; isopentenyl diphosphate from 1-deoxy-D-xylulose 5-phosphate: step 1/6. Functionally, catalyzes the NADPH-dependent rearrangement and reduction of 1-deoxy-D-xylulose-5-phosphate (DXP) to 2-C-methyl-D-erythritol 4-phosphate (MEP). The polypeptide is 1-deoxy-D-xylulose 5-phosphate reductoisomerase (Geotalea uraniireducens (strain Rf4) (Geobacter uraniireducens)).